Reading from the N-terminus, the 412-residue chain is Cytochrome P450-SOY (412 aa).

Polar residues predominate over residues 1 to 25 (MTESTTDPARQNLDPTSPAPATSFP). Residues 1-38 (MTESTTDPARQNLDPTSPAPATSFPQDRGCPYHPPAGY) are disordered. Cys-361 lines the heme pocket.

Belongs to the cytochrome P450 family. Heme serves as cofactor.

The protein resides in the cytoplasm. The protein is Cytochrome P450-SOY (cyp105D1) of Streptomyces griseus.